Consider the following 536-residue polypeptide: Light-independent protochlorophyllide reductase subunit B (536 aa).

Asp-36 is a [4Fe-4S] cluster binding site. Asp-292 (proton donor) is an active-site residue. 427-428 (GL) contributes to the substrate binding site. The tract at residues 447 to 489 (QSHLGHLGGHQSQTEQQQSQAATNPSTQSNTDSSSEESPLWTP) is disordered. Residues 448-469 (SHLGHLGGHQSQTEQQQSQAAT) show a composition bias toward low complexity. The segment covering 470–483 (NPSTQSNTDSSSEE) has biased composition (polar residues).

Belongs to the ChlB/BchB/BchZ family. As to quaternary structure, protochlorophyllide reductase is composed of three subunits; ChlL, ChlN and ChlB. Forms a heterotetramer of two ChlB and two ChlN subunits. [4Fe-4S] cluster serves as cofactor.

The catalysed reaction is chlorophyllide a + oxidized 2[4Fe-4S]-[ferredoxin] + 2 ADP + 2 phosphate = protochlorophyllide a + reduced 2[4Fe-4S]-[ferredoxin] + 2 ATP + 2 H2O. It participates in porphyrin-containing compound metabolism; chlorophyll biosynthesis (light-independent). Component of the dark-operative protochlorophyllide reductase (DPOR) that uses Mg-ATP and reduced ferredoxin to reduce ring D of protochlorophyllide (Pchlide) to form chlorophyllide a (Chlide). This reaction is light-independent. The NB-protein (ChlN-ChlB) is the catalytic component of the complex. The sequence is that of Light-independent protochlorophyllide reductase subunit B from Prochlorococcus marinus (strain MIT 9303).